Here is a 495-residue protein sequence, read N- to C-terminus: Oxidoreductase AflY (495 aa).

Positions Met-1–Thr-22 are disordered.

This sequence belongs to the questin oxidase family.

It functions in the pathway mycotoxin biosynthesis; aflatoxin biosynthesis. Its function is as follows. Oxidoreductase; part of the gene cluster that mediates the biosynthesis of aflatoxins, a group of polyketide-derived furanocoumarins, and part of the most toxic and carcinogenic compounds among the known mycotoxins. The four major aflatoxins produced by A.parasiticus are aflatoxin B1 (AFB1), aflatoxin B2 (AFB2), aflatoxin G1 (AFG1) and aflatoxin G2 (AFG2). Within the aflatoxin pathway, the oxidoreductase aflY seems to be involved in the conversion of versicolorin A (VERA) to demethylsterigmatocystin (DMST), through probable Baeyer-Villiger oxidation required for the formation of the xanthone ring. The biosynthesis of aflatoxins begins with the norsolorinic acid synthase aflC that combines a hexanoyl starter unit produced by the fatty acid synthase aflA/aflB and 7 malonyl-CoA extender units to synthesize the precursor NOR. The second step is the conversion of NOR to averantin and requires the norsolorinic acid ketoreductase aflD, which catalyzes the dehydration of norsolorinic acid to form (1'S)-averantin. The norsolorinic acid reductases aflE and aflF may also play a role in the conversion of NOR to AVN. The cytochrome P450 monooxygenase aflG then catalyzes the hydroxylation of AVN to 5'hydroxyaverantin (HAVN). The next step is performed by the 5'-hydroxyaverantin dehydrogenase aflH that transforms HAVN to 5'-oxoaverantin (OAVN) which is further converted to averufin (AVF) by aflK that plays a dual role in the pathway, as a 5'-oxoaverantin cyclase that mediates conversion of 5'-oxoaverantin, as well as a versicolorin B synthase in a later step in the pathway. The averufin oxidase aflI catalyzes the conversion of AVF to versiconal hemiacetal acetate (VHA). VHA is then the substrate for the versiconal hemiacetal acetate esterase aflJ to yield versiconal (VAL). Versicolorin B synthase aflK then converts VAL to versicolorin B (VERB) by closing the bisfuran ring of aflatoxin which is required for DNA-binding, thus giving to aflatoxin its activity as a mutagen. Then, the activity of the versicolorin B desaturase aflL leads to versicolorin A (VERA). A branch point starts from VERB since it can also be converted to dihydrodemethylsterigmatocystin (DMDHST), probably also by aflL, VERA being a precursor for aflatoxins B1 and G1, and DMDHST for aflatoxins B2 and G2. Next, the versicolorin reductase aflM and the cytochrome P450 monooxygenase aflN are involved in conversion of VERA to demethylsterigmatocystin (DMST). AflX and aflY seem also involved in this step, through probable aflX-mediated epoxide ring-opening step following versicolorin A oxidation and aflY-mediated Baeyer-Villiger oxidation required for the formation of the xanthone ring. The methyltransferase aflO then leads to the modification of DMST to sterigmatocystin (ST), and of DMDHST to dihydrosterigmatocystin (DHST). Both ST and DHST are then substrates of the O-methyltransferase aflP to yield O-methylsterigmatocystin (OMST) and dihydro-O-methylsterigmatocystin (DHOMST), respectively. Finally OMST is converted to aflatoxins B1 and G1, and DHOMST to aflatoxins B2 and G2, via the action of several enzymes including O-methylsterigmatocystin oxidoreductase aflQ, the cytochrome P450 monooxygenase aflU, but also the NADH-dependent flavin oxidoreductase nadA which is specifically required for the synthesis of AFG1. The protein is Oxidoreductase AflY of Aspergillus parasiticus (strain ATCC 56775 / NRRL 5862 / SRRC 143 / SU-1).